The sequence spans 173 residues: SKP1-like protein 1 (173 aa).

An interaction with the F-box domain of F-box proteins region spans residues 115–173; that stretch reads ILAANYLNIKGLLDLTCQTVADMIKGKTPEEIRKTFNIKNDFTPEEEEEIRRENQWAFE.

Belongs to the SKP1 family. Part of a SCF (SKP1-CUL1-F-box protein) E3 ubiquitin-protein ligase complex. Interacts directly with MOF (via F-box domain). Interacts with rice black streaked dwarf virus RBSDV protein P7-2. Is able to form the SCF complex together with CUL1 and the viral P7-2 protein. Interacts with D3.

It is found in the nucleus. It functions in the pathway protein modification; protein ubiquitination. Functionally, involved in ubiquitination and subsequent proteasomal degradation of target proteins. Together with CUL1, a RING-box and a F-box protein, it forms a SCF E3 ubiquitin ligase complex. The functional specificity of this complex depends on the type of F-box protein. In the SCF complex, it serves as an adapter that links the F-box protein to CUL1. In Oryza sativa subsp. japonica (Rice), this protein is SKP1-like protein 1.